Here is a 1997-residue protein sequence, read N- to C-terminus: Otoferlin (1997 aa).

Residues 1 to 98 form the C2 1 domain; it reads MALLIHLKTV…VEESHVEVTD (98 aa). Residues 1–1963 are Cytoplasmic-facing; that stretch reads MALLIHLKTV…ARYFLWHTYR (1963 aa). The interval 128-171 is disordered; it reads WDDGDFLGDESLQEEEKDSQETDGLLPGSRPSSRPPGEKSFRRA. The segment covering 129–145 has biased composition (acidic residues); it reads DDGDFLGDESLQEEEKD. C2 domains follow at residues 236 to 357 and 400 to 531; these read KRSK…HKWA and IEGN…FLPT. Positions 642–694 are disordered; that stretch reads NEVDGLSRPQRPRPRKEPGDEEEVDLIQNASDDEAGDAGDLASVSSTPPMRPQ. Residues 660-678 are compositionally biased toward acidic residues; it reads GDEEEVDLIQNASDDEAGD. The stretch at 792-821 forms a coiled coil; the sequence is RERLKSCMRELENMGQQARMLRAQVKRHTV. C2 domains follow at residues 944 to 1069 and 1115 to 1242; these read LHAF…PPRF and DRGP…PSWN. 5 residues coordinate Ca(2+): Asp-976, Asp-982, Asp-1038, Asp-1040, and Asp-1046. Disordered regions lie at residues 1299–1324 and 1343–1405; these read AEEE…PDES and LRQQ…KPKI. Acidic residues-rich tracts occupy residues 1314–1324 and 1352–1361; these read EEPEEEEPDES and DLEEKEEVDN. Positions 1370-1383 are enriched in basic and acidic residues; that stretch reads KGKEKARAAKEEKK. Low complexity predominate over residues 1387–1396; that stretch reads QSSGSGQGSE. C2 domains follow at residues 1464–1593 and 1714–1865; these read LPED…ATCG and DMPA…KQCT. Ca(2+)-binding residues include Asp-1508, Asp-1514, Asp-1563, Asp-1565, Asp-1571, Asp-1836, Ser-1839, and Asp-1842. Residues 1964 to 1984 form a helical membrane-spanning segment; it reads WLLLKLLLLLLLLLLLALFLY. The Extracellular segment spans residues 1985-1997; it reads SVPGYLVKKILGA.

This sequence belongs to the ferlin family. In terms of assembly, interacts with SNAP2; the interaction is direct. Interacts with STX1; the interaction is direct. Interacts with RAB8B. Ca(2+) serves as cofactor. As to expression, isoform 1 and isoform 3 are found in adult brain. Isoform 2 is expressed in the fetus and in adult brain, heart, placenta, skeletal muscle and kidney.

The protein localises to the cytoplasmic vesicle. It is found in the secretory vesicle. The protein resides in the synaptic vesicle membrane. It localises to the basolateral cell membrane. Its subcellular location is the endoplasmic reticulum membrane. The protein localises to the golgi apparatus membrane. It is found in the presynaptic cell membrane. The protein resides in the cell membrane. In terms of biological role, key calcium ion sensor involved in the Ca(2+)-triggered synaptic vesicle-plasma membrane fusion and in the control of neurotransmitter release at these output synapses. Interacts in a calcium-dependent manner to the presynaptic SNARE proteins at ribbon synapses of cochlear inner hair cells (IHCs) to trigger exocytosis of neurotransmitter. Also essential to synaptic exocytosis in immature outer hair cells (OHCs). May also play a role within the recycling of endosomes. In Homo sapiens (Human), this protein is Otoferlin (OTOF).